Here is an 82-residue protein sequence, read N- to C-terminus: Small ribosomal subunit protein bS16 (82 aa).

Belongs to the bacterial ribosomal protein bS16 family.

The protein is Small ribosomal subunit protein bS16 of Actinobacillus succinogenes (strain ATCC 55618 / DSM 22257 / CCUG 43843 / 130Z).